The sequence spans 1309 residues: Tetratricopeptide repeat protein 41 (1309 aa).

6 TPR repeats span residues 399 to 432 (PQLE…KPCI), 651 to 684 (WIQE…SVRE), 817 to 851 (LTFL…SVQS), 859 to 892 (LKAQ…LLRF), 989 to 1024 (MSYF…KEKA), and 1042 to 1079 (SDTL…RAAH).

It is found in the cytoplasm. This chain is Tetratricopeptide repeat protein 41, found in Rattus norvegicus (Rat).